The primary structure comprises 208 residues: Large ribosomal subunit protein uL3 (208 aa).

The tract at residues 117 to 147 is disordered; that stretch reads FQGVIKRHGQSRGPMAHGSRYHRRPGSMGPV.

This sequence belongs to the universal ribosomal protein uL3 family. In terms of assembly, part of the 50S ribosomal subunit. Forms a cluster with proteins L14 and L19.

In terms of biological role, one of the primary rRNA binding proteins, it binds directly near the 3'-end of the 23S rRNA, where it nucleates assembly of the 50S subunit. In Streptococcus equi subsp. zooepidemicus (strain H70), this protein is Large ribosomal subunit protein uL3.